The chain runs to 164 residues: Transcription factor E (164 aa).

In terms of domain architecture, HTH TFE/IIEalpha-type spans 5-87 (NDKVIRGYLR…LWHLDFSDIE (83 aa)).

It belongs to the TFE family. As to quaternary structure, monomer. Interaction with RNA polymerase subunits RpoF and RpoE is necessary for Tfe stimulatory transcription activity. Able to interact with Tbp and RNA polymerase in the absence of DNA promoter. Interacts both with the preinitiation and elongation complexes.

Transcription factor that plays a role in the activation of archaeal genes transcribed by RNA polymerase. Facilitates transcription initiation by enhancing TATA-box recognition by TATA-box-binding protein (Tbp), and transcription factor B (Tfb) and RNA polymerase recruitment. Not absolutely required for transcription in vitro, but particularly important in cases where Tbp or Tfb function is not optimal. It dynamically alters the nucleic acid-binding properties of RNA polymerases by stabilizing the initiation complex and destabilizing elongation complexes. Seems to translocate with the RNA polymerase following initiation and acts by binding to the non template strand of the transcription bubble in elongation complexes. This Methanosarcina mazei (strain ATCC BAA-159 / DSM 3647 / Goe1 / Go1 / JCM 11833 / OCM 88) (Methanosarcina frisia) protein is Transcription factor E.